The primary structure comprises 569 residues: WD repeat-containing protein 20 (569 aa).

Ala-2 carries the post-translational modification N-acetylalanine. WD repeat units lie at residues 94-138 (RIYK…KETS), 139-210 (KLFN…KSTR), 211-252 (NPLL…FDSV), 253-331 (ELHG…SGSD), 332-426 (EDFQ…NSVP), 427-523 (PPLP…VPLL), and 524-559 (EPLI…CTWG). Phosphoserine is present on residues Ser-357 and Ser-360. 2 stretches are compositionally biased toward polar residues: residues 405 to 423 (NATS…TPGN) and 431 to 445 (RSNS…NAGS). A disordered region spans residues 405-445 (NATSPPAGSNGNSVTTPGNSVPPPLPRSNSLPHSAVSNAGS). Phosphoserine is present on residues Ser-432, Ser-434, and Ser-465. The tract at residues 450–468 (MDGAIASGVSKFATLSLHD) is mediates XPO1-dependent nuclear export of WDR20-USP12 complexes.

In terms of assembly, interacts with USP12; promotes translocation of USP12/WDR20 to the plasma membrane. Component of the USP12/WDR20/WDR48 deubiquitinating complex. Interacts with USP46; contributes to the cytoplasmic localization of the USP46/WDR20 complex. Component of the USP12/DMWD/WDR48 deubiquitinating complex.

It localises to the cytoplasm. Its subcellular location is the nucleus. Regulator of deubiquitinating complexes. Activates deubiquitinating activity of complexes containing USP12. Anchors at the base of the ubiquitin-contacting loop of USP12 and remotely modulates the catalytic center of the enzyme. Regulates shuttling of the USP12 deubiquitinase complex between the plasma membrane, cytoplasm and nucleus. This is WD repeat-containing protein 20 (WDR20) from Homo sapiens (Human).